The following is a 207-amino-acid chain: MTLPDFRLIRLLPLASLVLTACTINAPKGPGKSPDSPQWRQHQQDVRKLNQYQTRGAFAYISDDQKVYARFFWQQTGQDRYRLLLTNPLGSTELELNAQPGNVQLVDNKGQRYTADDAEEMIGKLTGMPIPLNSLRQWILGLPGDATDYTLDDQYRLSEVNYHQDGKNWKVVYSGYDSKTQPAMPANMELSDGSQRIKLKMDNWIVK.

Positions methionine 1 to alanine 21 are cleaved as a signal peptide. Residue cysteine 22 is the site of N-palmitoyl cysteine attachment. The S-diacylglycerol cysteine moiety is linked to residue cysteine 22.

Belongs to the LolB family. As to quaternary structure, monomer.

The protein localises to the cell outer membrane. Functionally, plays a critical role in the incorporation of lipoproteins in the outer membrane after they are released by the LolA protein. The polypeptide is Outer-membrane lipoprotein LolB (Citrobacter koseri (strain ATCC BAA-895 / CDC 4225-83 / SGSC4696)).